A 405-amino-acid chain; its full sequence is MTRLATLITLAGLLAVSPGAYAQRNRNDTGGSTGAEGLNSLAVKAGLLYFGTASDTRNFADEPYMSVVNNTNEFGMIVPENSMKWEATEKEPGRFSFANADRVRALTKANGQMLRCHALTWHSQLPNFVKTTAWTRDTLTAAIESHISNEVGHFAGDCYAWDVVNEAVNENGSFRDSPFHRTLGTDFLAISFRAAAAADPNAKLYYNDFNIETPGPKANAAMGIVRLLKEQGVRIDGVGFQGHLTVGSTPSRAQLASQLQRFADLGVEVTYTELDIRHKSLPVSSRAAQDQARDYVSVIGSCLDVTACVGVMVWQPTDKYSWIPETFPGTGDACLFDANMNPKPAYTSVSSLLAAAAATAPASVVPPASVTTSKTPIQAGAGRETVSIAGLTLALSSLAFGMFML.

An N-terminal signal peptide occupies residues 1–22 (MTRLATLITLAGLLAVSPGAYA). Residues asparagine 27 and asparagine 69 are each glycosylated (N-linked (GlcNAc...) asparagine). Positions 32-352 (STGAEGLNSL…KPAYTSVSSL (321 aa)) constitute a GH10 domain. Glutamate 166 (proton donor) is an active-site residue. Asparagine 171 carries N-linked (GlcNAc...) asparagine glycosylation. The Nucleophile role is filled by glutamate 273. Cysteines 302 and 308 form a disulfide. The GPI-anchor amidated glycine moiety is linked to residue glycine 380. A propeptide spans 381–405 (AGRETVSIAGLTLALSSLAFGMFML) (removed in mature form).

It belongs to the glycosyl hydrolase 10 (cellulase F) family.

The protein localises to the cell membrane. Its subcellular location is the secreted. The enzyme catalyses Endohydrolysis of (1-&gt;4)-beta-D-xylosidic linkages in xylans.. The protein operates within glycan degradation; xylan degradation. In terms of biological role, endo-1,4-beta-xylanase involved in the hydrolysis of xylan, a major structural heterogeneous polysaccharide found in plant biomass representing the second most abundant polysaccharide in the biosphere, after cellulose. The sequence is that of Endo-1,4-beta-xylanase 5 (XYL5) from Pyricularia grisea (Crabgrass-specific blast fungus).